The sequence spans 138 residues: Large ribosomal subunit protein uL16 (138 aa).

Basic residues predominate over residues 1-17 (MLQPKRTKFRKQHKGRN). Residues 1–22 (MLQPKRTKFRKQHKGRNRGVAT) form a disordered region.

This sequence belongs to the universal ribosomal protein uL16 family. As to quaternary structure, part of the 50S ribosomal subunit.

Functionally, binds 23S rRNA and is also seen to make contacts with the A and possibly P site tRNAs. The sequence is that of Large ribosomal subunit protein uL16 from Acidithiobacillus ferrooxidans (strain ATCC 23270 / DSM 14882 / CIP 104768 / NCIMB 8455) (Ferrobacillus ferrooxidans (strain ATCC 23270)).